A 206-amino-acid polypeptide reads, in one-letter code: Adenylyl-sulfate kinase (206 aa).

Residue 36 to 43 coordinates ATP; it reads GLSGSGKS. Serine 110 serves as the catalytic Phosphoserine intermediate.

It belongs to the APS kinase family.

It carries out the reaction adenosine 5'-phosphosulfate + ATP = 3'-phosphoadenylyl sulfate + ADP + H(+). The protein operates within sulfur metabolism; hydrogen sulfide biosynthesis; sulfite from sulfate: step 2/3. In terms of biological role, catalyzes the synthesis of activated sulfate. The protein is Adenylyl-sulfate kinase (cysC) of Buchnera aphidicola subsp. Acyrthosiphon pisum (strain APS) (Acyrthosiphon pisum symbiotic bacterium).